The following is a 296-amino-acid chain: Transcription repressor OFP3 (296 aa).

2 disordered regions span residues 27–115 (MSRS…SANA) and 131–196 (PSDQ…AHSS). Residues 60-69 (LSSTAHHPQA) show a composition bias toward polar residues. Positions 78-88 (SFKRKIKRKTV) are enriched in basic residues. Residues 92–115 (SSRLKLSTSSSLNHRSKSSSSANA) show a composition bias toward low complexity. The span at 136 to 159 (FVHDPEPHSSIDIKDELSVRKLDD) shows a compositional bias: basic and acidic residues. The 60-residue stretch at 228-287 (IVLSSVDPEKDFRESMVEMIMENKMREQKDLEDLLACYLSLNSSEYHDVIIKAFENTWLH) folds into the OVATE domain.

Interacts with BLH1, BLH3, KNAT5 and KNAT7.

It localises to the nucleus. Functionally, transcriptional repressor that may regulate multiple aspects of plant growth and development through the regulation of BEL1-LIKE (BLH) and KNOX TALE (KNAT) homeodomain transcription factors. This Arabidopsis thaliana (Mouse-ear cress) protein is Transcription repressor OFP3 (OFP3).